The sequence spans 80 residues: Acyl carrier protein (80 aa).

The Carrier domain occupies 2–77; the sequence is SDTLKRLQKI…DALNYIENKI (76 aa). Serine 37 bears the O-(pantetheine 4'-phosphoryl)serine mark.

It belongs to the acyl carrier protein (ACP) family. Post-translationally, 4'-phosphopantetheine is transferred from CoA to a specific serine of apo-ACP by AcpS. This modification is essential for activity because fatty acids are bound in thioester linkage to the sulfhydryl of the prosthetic group.

The protein resides in the plastid. It localises to the chloroplast. Its pathway is lipid metabolism; fatty acid biosynthesis. In terms of biological role, carrier of the growing fatty acid chain in fatty acid biosynthesis. The polypeptide is Acyl carrier protein (Cylindrotheca sp. (strain N1) (Marine diatom)).